The sequence spans 292 residues: Hypersensitive-induced response protein 4 (292 aa).

The N-myristoyl glycine moiety is linked to residue Gly2.

Self-interacts and forms heteromers. Interacts with NB-LRR class of R proteins before R proteins (e.g. RPS2 or RPM1) are activated by the effectors.

Its subcellular location is the cell membrane. This is Hypersensitive-induced response protein 4 (HIR4) from Arabidopsis thaliana (Mouse-ear cress).